The following is a 431-amino-acid chain: Histidinol dehydrogenase (431 aa).

NAD(+) is bound by residues Tyr-127, Gln-190, and Asn-213. Substrate-binding residues include Ser-238, Gln-260, and His-263. The Zn(2+) site is built by Gln-260 and His-263. Residues Glu-329 and His-330 each act as proton acceptor in the active site. His-330, Asp-363, Glu-417, and His-422 together coordinate substrate. Zn(2+) is bound at residue Asp-363. A Zn(2+)-binding site is contributed by His-422.

Belongs to the histidinol dehydrogenase family. Zn(2+) is required as a cofactor.

The enzyme catalyses L-histidinol + 2 NAD(+) + H2O = L-histidine + 2 NADH + 3 H(+). The protein operates within amino-acid biosynthesis; L-histidine biosynthesis; L-histidine from 5-phospho-alpha-D-ribose 1-diphosphate: step 9/9. Its function is as follows. Catalyzes the sequential NAD-dependent oxidations of L-histidinol to L-histidinaldehyde and then to L-histidine. The sequence is that of Histidinol dehydrogenase from Methanopyrus kandleri (strain AV19 / DSM 6324 / JCM 9639 / NBRC 100938).